A 317-amino-acid chain; its full sequence is Protein-methionine-sulfoxide reductase catalytic subunit MsrP (317 aa).

Positions Met-1–Ala-40 form a signal peptide, tat-type signal. Residues Asn-72, Tyr-75–Glu-76, Cys-129, Thr-164, Asn-216, Arg-221, and Ser-232–Lys-234 contribute to the Mo-molybdopterin site.

Belongs to the MsrP family. Heterodimer of a catalytic subunit (MsrP) and a heme-binding subunit (MsrQ). Mo-molybdopterin is required as a cofactor. Post-translationally, predicted to be exported by the Tat system. The position of the signal peptide cleavage has not been experimentally proven.

It is found in the periplasm. It carries out the reaction L-methionyl-[protein] + a quinone + H2O = L-methionyl-(S)-S-oxide-[protein] + a quinol. The catalysed reaction is L-methionyl-[protein] + a quinone + H2O = L-methionyl-(R)-S-oxide-[protein] + a quinol. Part of the MsrPQ system that repairs oxidized periplasmic proteins containing methionine sulfoxide residues (Met-O), using respiratory chain electrons. Thus protects these proteins from oxidative-stress damage caused by reactive species of oxygen and chlorine generated by the host defense mechanisms. MsrPQ is essential for the maintenance of envelope integrity under bleach stress, rescuing a wide series of structurally unrelated periplasmic proteins from methionine oxidation. The catalytic subunit MsrP is non-stereospecific, being able to reduce both (R-) and (S-) diastereoisomers of methionine sulfoxide. The polypeptide is Protein-methionine-sulfoxide reductase catalytic subunit MsrP (Actinobacillus succinogenes (strain ATCC 55618 / DSM 22257 / CCUG 43843 / 130Z)).